Here is a 382-residue protein sequence, read N- to C-terminus: UDP-4-amino-4-deoxy-L-arabinose--oxoglutarate aminotransferase (382 aa).

K183 is subject to N6-(pyridoxal phosphate)lysine.

Belongs to the DegT/DnrJ/EryC1 family. ArnB subfamily. Homodimer. It depends on pyridoxal 5'-phosphate as a cofactor.

The catalysed reaction is UDP-4-amino-4-deoxy-beta-L-arabinose + 2-oxoglutarate = UDP-beta-L-threo-pentopyranos-4-ulose + L-glutamate. The protein operates within nucleotide-sugar biosynthesis; UDP-4-deoxy-4-formamido-beta-L-arabinose biosynthesis; UDP-4-deoxy-4-formamido-beta-L-arabinose from UDP-alpha-D-glucuronate: step 2/3. Its pathway is bacterial outer membrane biogenesis; lipopolysaccharide biosynthesis. Functionally, catalyzes the conversion of UDP-4-keto-arabinose (UDP-Ara4O) to UDP-4-amino-4-deoxy-L-arabinose (UDP-L-Ara4N). The modified arabinose is attached to lipid A and is required for resistance to polymyxin and cationic antimicrobial peptides. The chain is UDP-4-amino-4-deoxy-L-arabinose--oxoglutarate aminotransferase from Pseudomonas aeruginosa (strain LESB58).